The primary structure comprises 307 residues: Agmatinase (307 aa).

The Mn(2+) site is built by His128, Asp151, His153, Asp155, Asp232, and Asp234.

The protein belongs to the arginase family. Agmatinase subfamily. Mn(2+) is required as a cofactor.

It carries out the reaction agmatine + H2O = urea + putrescine. The protein operates within amine and polyamine biosynthesis; putrescine biosynthesis via agmatine pathway; putrescine from agmatine: step 1/1. Its function is as follows. Catalyzes the formation of putrescine from agmatine. The polypeptide is Agmatinase (Photorhabdus laumondii subsp. laumondii (strain DSM 15139 / CIP 105565 / TT01) (Photorhabdus luminescens subsp. laumondii)).